Here is a 267-residue protein sequence, read N- to C-terminus: N-formylglutamate deformylase (267 aa).

Belongs to the N-formylglutamate deformylase family. As to quaternary structure, monomer.

It catalyses the reaction N-formyl-L-glutamate + H2O = formate + L-glutamate. Its pathway is amino-acid degradation; L-histidine degradation into L-glutamate; L-glutamate from N-formimidoyl-L-glutamate (deiminase route): step 2/2. Stimulated by Co(2+). Fe(2+) is also a good activator, particularly at lower concentrations, but it inhibits slightly the activity when used at concentrations over 0.1 mM. Other divalent metals tested (Cd(2+), Ca(2+), Mn(2+), Zn(2+), Ni(2+) and Mg(2+)) are not effective activators. Catalyzes the hydrolysis of N-formyl-L-glutamate to formate and L-glutamate. The sequence is that of N-formylglutamate deformylase from Pseudomonas putida (Arthrobacter siderocapsulatus).